A 264-amino-acid polypeptide reads, in one-letter code: Phosphatidylglycerol--prolipoprotein diacylglyceryl transferase (264 aa).

The next 3 membrane-spanning stretches (helical) occupy residues 17 to 37 (LAIHWYGLTYLVAFGLFLWLA), 59 to 79 (LLFYGVLGVIIGGRLGYVLFY), and 95 to 115 (WKGGMAFHGGLLGVIGAMALF). A 1,2-diacyl-sn-glycero-3-phospho-(1'-sn-glycerol) is bound at residue R142. The next 2 helical transmembrane spans lie at 205-225 (GQVSGAFLVGYGVLRFIAEYF) and 241-261 (MGQWLCVPMVAAGVALWVWAG).

Belongs to the Lgt family.

It localises to the cell inner membrane. It carries out the reaction L-cysteinyl-[prolipoprotein] + a 1,2-diacyl-sn-glycero-3-phospho-(1'-sn-glycerol) = an S-1,2-diacyl-sn-glyceryl-L-cysteinyl-[prolipoprotein] + sn-glycerol 1-phosphate + H(+). The protein operates within protein modification; lipoprotein biosynthesis (diacylglyceryl transfer). Its function is as follows. Catalyzes the transfer of the diacylglyceryl group from phosphatidylglycerol to the sulfhydryl group of the N-terminal cysteine of a prolipoprotein, the first step in the formation of mature lipoproteins. The polypeptide is Phosphatidylglycerol--prolipoprotein diacylglyceryl transferase (Methylibium petroleiphilum (strain ATCC BAA-1232 / LMG 22953 / PM1)).